The sequence spans 126 residues: Small ribosomal subunit protein bS6 (126 aa).

The interval 104–126 (LARRDRGDRPERPREDFGAQAQA) is disordered. The segment covering 105–120 (ARRDRGDRPERPREDF) has biased composition (basic and acidic residues).

It belongs to the bacterial ribosomal protein bS6 family.

Its function is as follows. Binds together with bS18 to 16S ribosomal RNA. This chain is Small ribosomal subunit protein bS6, found in Caulobacter vibrioides (strain ATCC 19089 / CIP 103742 / CB 15) (Caulobacter crescentus).